A 313-amino-acid polypeptide reads, in one-letter code: 4-diphosphocytidyl-2-C-methyl-D-erythritol kinase (313 aa).

Lys27 is a catalytic residue. 110-120 (PIGGGVGGGSS) lines the ATP pocket. Asp152 is an active-site residue.

This sequence belongs to the GHMP kinase family. IspE subfamily.

It catalyses the reaction 4-CDP-2-C-methyl-D-erythritol + ATP = 4-CDP-2-C-methyl-D-erythritol 2-phosphate + ADP + H(+). It functions in the pathway isoprenoid biosynthesis; isopentenyl diphosphate biosynthesis via DXP pathway; isopentenyl diphosphate from 1-deoxy-D-xylulose 5-phosphate: step 3/6. Its function is as follows. Catalyzes the phosphorylation of the position 2 hydroxy group of 4-diphosphocytidyl-2C-methyl-D-erythritol. The protein is 4-diphosphocytidyl-2-C-methyl-D-erythritol kinase of Histophilus somni (strain 2336) (Haemophilus somnus).